The sequence spans 731 residues: MSWFVDLAGKAEDLLNRVDQGAATALSRKDNASNIYSKNTDYTELHQQNTDLIYQTGPKSTYISSAADNIRNQKATILAGTANVKVGSRTPVEASHPVENASVPRPSSHFVRRKKSEPDDELLFDFLNSSQKEPTGRVEIRKEKGKTPVFQSSQTSSVSSVNPSVTTIKTIEENSFGSQTHEAASNSDSSHEGQEESSKENVSSNAACPDHTPTPNDDGKSHELSNLRLENQLLRNEVQSLNQEMASLLQRSKETQEELNKARARVEKWNADHSKSDRMTRGLRAQVDDLTEAVAAKDSQLAVLKVRLQEADQLLSTRTEALEALQSEKSRIMQDQSEGNSLQNQALQTFQERLHEADATLKREQESYKQMQSEFAARLNKVEMERQNLAEAITLAERKYSDEKKRVDELQQQVKLYKLNLESSKQELIDYKQKATRILQSKEKLINSLKEGSGFEGLDSSTASSMELEELRHEKEMQREEIQKLMGQIHQLRSELQDMEAQQVNEAESAREQLQDLHDQIAGQKASKQELETELERLKQEFHYIEEDLYRTKNTLQSRIKDRDEEIQKLRNQLTNKTLSNSSQSELENRLHQLTETLIQKQTMLESLSTEKNSLVFQLERLEQQMNSASGSSSNGSSINMSGIDNGEGTRLRNVPVLFNDTETNLAGMYGKVRKAASSIDQFSIRLGIFLRRYPIARVFVIIYMALLHLWVMIVLLTYTPEMHHDQPYGK.

An N-acetylserine modification is found at Ser-2. The Cytoplasmic segment spans residues 2–698 (SWFVDLAGKA…IFLRRYPIAR (697 aa)). Arg-89 carries the dimethylated arginine modification. The tract at residues 93–222 (EASHPVENAS…PTPNDDGKSH (130 aa)) is disordered. A Phosphoserine modification is found at Ser-116. Residues 134–146 (PTGRVEIRKEKGK) are compositionally biased toward basic and acidic residues. A compositionally biased stretch (low complexity) spans 147 to 167 (TPVFQSSQTSSVSSVNPSVTT). Residues 173 to 188 (ENSFGSQTHEAASNSD) show a composition bias toward polar residues. Residues 189–199 (SSHEGQEESSK) show a composition bias toward basic and acidic residues. A coiled-coil region spans residues 216–632 (NDDGKSHELS…EQQMNSASGS (417 aa)). Residues 699–719 (VFVIIYMALLHLWVMIVLLTY) traverse the membrane as a helical; Anchor for type IV membrane protein segment. Topologically, residues 720-731 (TPEMHHDQPYGK) are lumenal.

As to quaternary structure, homodimer. Interacts with RAB1A that has been activated by GTP-binding, and possibly also with OCRL1. Interacts with isoform CASP of CUX1. Highly phosphorylated during mitosis. Phosphorylation is barely detectable during interphase. As to expression, ubiquitous. Highly expressed in seminiferous tubules and Leydig cells in testis, and detected at much lower levels in the other tissues tested. Expression is very low or not detectable in spermatozoa.

It localises to the golgi apparatus membrane. Functionally, involved in maintaining Golgi structure. Stimulates the formation of Golgi stacks and ribbons. Involved in intra-Golgi retrograde transport. In Homo sapiens (Human), this protein is Golgin subfamily A member 5 (GOLGA5).